Reading from the N-terminus, the 321-residue chain is uncharacterized protein (321 aa).

Belongs to the NAD(P)-dependent epimerase/dehydratase family.

This is an uncharacterized protein from Staphylococcus aureus (strain COL).